We begin with the raw amino-acid sequence, 72 residues long: Phosphonoacetate hydrolase (72 aa).

Monomer. Requires Unlike bacterial phosphonoacetate hydrolase, does not require zinc as a cofactor. as cofactor.

It catalyses the reaction phosphonoacetate + H2O = acetate + phosphate + H(+). Its activity is regulated as follows. Unaffected by EDTA or Ca(2+), Co(2+), Cu(2+), Mg(2+), Mn(2+), Ni(2+) and Zn(2+). The sequence is that of Phosphonoacetate hydrolase from Penicillium oxalicum.